The following is a 368-amino-acid chain: 1-deoxy-D-xylulose 5-phosphate reductoisomerase (368 aa).

The NADPH site is built by threonine 9, glycine 10, serine 11, isoleucine 12, asparagine 35, and asparagine 106. 1-deoxy-D-xylulose 5-phosphate is bound at residue lysine 107. An NADPH-binding site is contributed by glutamate 108. Aspartate 132 contacts Mn(2+). Positions 133, 134, 158, and 181 each coordinate 1-deoxy-D-xylulose 5-phosphate. Glutamate 134 lines the Mn(2+) pocket. Glycine 187 is a binding site for NADPH. Serine 194, asparagine 199, lysine 200, and glutamate 203 together coordinate 1-deoxy-D-xylulose 5-phosphate. Glutamate 203 is a binding site for Mn(2+).

Belongs to the DXR family. Mg(2+) is required as a cofactor. Mn(2+) serves as cofactor.

It catalyses the reaction 2-C-methyl-D-erythritol 4-phosphate + NADP(+) = 1-deoxy-D-xylulose 5-phosphate + NADPH + H(+). It functions in the pathway isoprenoid biosynthesis; isopentenyl diphosphate biosynthesis via DXP pathway; isopentenyl diphosphate from 1-deoxy-D-xylulose 5-phosphate: step 1/6. Its function is as follows. Catalyzes the NADPH-dependent rearrangement and reduction of 1-deoxy-D-xylulose-5-phosphate (DXP) to 2-C-methyl-D-erythritol 4-phosphate (MEP). The polypeptide is 1-deoxy-D-xylulose 5-phosphate reductoisomerase (Mycoplasmoides gallisepticum (strain R(low / passage 15 / clone 2)) (Mycoplasma gallisepticum)).